Consider the following 135-residue polypeptide: ATP synthase epsilon chain (135 aa).

The protein belongs to the ATPase epsilon chain family. In terms of assembly, F-type ATPases have 2 components, CF(1) - the catalytic core - and CF(0) - the membrane proton channel. CF(1) has five subunits: alpha(3), beta(3), gamma(1), delta(1), epsilon(1). CF(0) has three main subunits: a, b and c.

It is found in the cell inner membrane. Its function is as follows. Produces ATP from ADP in the presence of a proton gradient across the membrane. The polypeptide is ATP synthase epsilon chain (Rhodopseudomonas palustris (strain HaA2)).